The chain runs to 338 residues: MVKAKIAVNGYGTIGKRVADAVRAQDDMEVIGISKTKPNYEAAVAHQIGYDIYAPAANLEAFEKAGMPAAGTIEEMVEKADLVVDCTPGGIGEKNKPMYEKAGVKAIWQGGEDHSLAGFSFNAICNYEQAVGRDLVRVVSCNTTALCRAIYPIDKELGVKKARVVLARRATDPNDVKKGPINAIVPDPIKLPSHHGPDVKSVLPQINITSAALKIPTTLMHVHTVNMEVEKDCTVDDVKNIFGSQPRIRFVGQGMSSTAEIMEFARDMKRPRNDMWENCIWPESITVGDKELYFFQAVHQESIVVPENVDAIRAMMEFESDGAKSIEKTNKAIGLSKK.

Residues 13–14 (TI) and Gly111 each bind NAD(+). 140–142 (SCN) is a binding site for D-glyceraldehyde 3-phosphate. Catalysis depends on Cys141, which acts as the Nucleophile. Arg169 provides a ligand contact to NAD(+). 195 to 196 (HG) serves as a coordination point for D-glyceraldehyde 3-phosphate. Gln300 serves as a coordination point for NAD(+).

This sequence belongs to the glyceraldehyde-3-phosphate dehydrogenase family. Homotetramer.

The protein localises to the cytoplasm. The enzyme catalyses D-glyceraldehyde 3-phosphate + phosphate + NADP(+) = (2R)-3-phospho-glyceroyl phosphate + NADPH + H(+). The catalysed reaction is D-glyceraldehyde 3-phosphate + phosphate + NAD(+) = (2R)-3-phospho-glyceroyl phosphate + NADH + H(+). It participates in carbohydrate degradation; glycolysis; pyruvate from D-glyceraldehyde 3-phosphate: step 1/5. The chain is Glyceraldehyde-3-phosphate dehydrogenase 1 from Methanosarcina barkeri (strain Fusaro / DSM 804).